We begin with the raw amino-acid sequence, 360 residues long: 8-hydroxygeraniol dehydrogenase (360 aa).

Zn(2+) is bound by residues Cys50, His72, Cys103, Cys106, Cys109, Cys117, and Cys166.

Belongs to the zinc-containing alcohol dehydrogenase family. Requires Zn(2+) as cofactor. As to expression, present in seedlings and vascular tissues (at protein level). Restricted to the epidermis.

The enzyme catalyses (6E)-8-hydroxygeraniol + 2 NADP(+) = (6E)-8-oxogeranial + 2 NADPH + 2 H(+). Dehydrogenase involved in the biosynthesis of oxogeranial from hydroxygeraniol, a precursor of the terpenoid indole alkaloids such as vinblastine and vincristine. This chain is 8-hydroxygeraniol dehydrogenase (10HGO), found in Catharanthus roseus (Madagascar periwinkle).